The sequence spans 463 residues: L-seryl-tRNA(Sec) selenium transferase (463 aa).

K295 carries the post-translational modification N6-(pyridoxal phosphate)lysine.

It belongs to the SelA family. In terms of assembly, homodecamer; pentamer of dimers. Binds only one seryl-tRNA(Sec) per dimer. The cofactor is pyridoxal 5'-phosphate.

It is found in the cytoplasm. The enzyme catalyses L-seryl-tRNA(Sec) + selenophosphate + H(+) = L-selenocysteinyl-tRNA(Sec) + phosphate. Its pathway is aminoacyl-tRNA biosynthesis; selenocysteinyl-tRNA(Sec) biosynthesis; selenocysteinyl-tRNA(Sec) from L-seryl-tRNA(Sec) (bacterial route): step 1/1. In terms of biological role, converts seryl-tRNA(Sec) to selenocysteinyl-tRNA(Sec) required for selenoprotein biosynthesis. The chain is L-seryl-tRNA(Sec) selenium transferase from Escherichia coli O6:H1 (strain CFT073 / ATCC 700928 / UPEC).